Consider the following 135-residue polypeptide: Small ribosomal subunit protein uS9 (135 aa).

Positions 108–118 (VGDSRRTEPHK) are enriched in basic and acidic residues. Residues 108 to 135 (VGDSRRTEPHKPNRSTKGPRAKRQKSYR) form a disordered region. A compositionally biased stretch (basic residues) spans 119-135 (PNRSTKGPRAKRQKSYR).

This sequence belongs to the universal ribosomal protein uS9 family. As to quaternary structure, part of the 30S ribosomal subunit.

This chain is Small ribosomal subunit protein uS9, found in Thermococcus kodakarensis (strain ATCC BAA-918 / JCM 12380 / KOD1) (Pyrococcus kodakaraensis (strain KOD1)).